An 858-amino-acid chain; its full sequence is MSVVGLDVGSQSCYIAVARAGGIETIANEFSDRCTPSVISFGSKNRTIGVAAKNQQITHANNTVSNFKRFHGRAFNDPFIQKEKENLSYDLVPLKNGGVGIKVMYMGEEHLFSVEQITAMLLTKLKETAENSLKKPVTDCVISVPSFFTDAERRSVLDAAQIVGLNCLRLMNDMTAVALNYGIYKQDLPSLDEKPRIVVFVDMGHSAFQVSACAFNKGKLKVLGTAFDPFLGGKNFDEKLVEHFCAEFKTKYKLDAKSKIRALLRLYQECEKLKKLMSSNSTDLPLNIECFMNDKDVSGKMNRSQFEELCAELLQKIEVPLYSLLEQTHLKVEDVSAVEIVGGATRIPAVKERIAKFFGKDISTTLNADEAVARGCALQCAILSPAFKVREFSVTDAVPFPISLIWNHDSEDTEGVHEVFSRNHAAPFSKVLTFLRRGPFELEAFYSDPQGVPYPEAKIGRFVVQNVSAQKDGEKSRVKVKVRVNTHGIFTISTASMVEKVPTEENEMSSEADMECLNQRPPENPDTDKNVQQDNSEAGTQPQVQTDAQQTSQSPPSPELTSEENKIPDADKANEKKVDQPPEAKKPKIKVVNVELPIEANLVWQLGKDLLNMYIETEGKMIMQDKLEKERNDAKNAVEEYVYEFRDKLCGPYEKFICEQDHQNFLRLLTETEDWLYEEGEDQAKQAYVDKLEELMKIGTPVKVRFQEAEERPKMFEELGQRLQHYAKIAADFRNKDEKYNHIDESEMKKVEKSVNEVMEWMNNVMNAQAKESLDQDPVVRAQEIKTKIKELNNTCEPVVTQPKPKIESPKLERTPNGPNIDKKEEDLEDKNNFGAEPPHQNGECYPNEKNSVNMDLD.

The residue at position 2 (S2) is an N-acetylserine. Residue K471 is modified to N6-acetyllysine. Disordered regions lie at residues 500–584 (KVPT…PPEA) and 796–858 (CEPV…MDLD). The span at 504-514 (EENEMSSEADM) shows a compositional bias: acidic residues. S509 and S510 each carry phosphoserine. Residues 532–554 (QQDNSEAGTQPQVQTDAQQTSQS) show a composition bias toward polar residues. Residue S557 is modified to Phosphoserine. T561 is subject to Phosphothreonine. Basic and acidic residues-rich tracts occupy residues 563 to 584 (EENK…PPEA) and 805 to 814 (PKIESPKLER). S809 carries the phosphoserine modification. The residue at position 815 (T815) is a Phosphothreonine. The segment covering 821–832 (IDKKEEDLEDKN) has biased composition (basic and acidic residues). Over residues 849–858 (EKNSVNMDLD) the composition is skewed to polar residues.

This sequence belongs to the heat shock protein 70 family. In terms of assembly, interacts with HSPA8/HSC70. Interacts with HSPA1A (via NBD) and HSPA1B (via NBD). Phosphorylation on Ser-509 may be important for regulation of the HSPA8/HSC70 chaperone activity.

Its subcellular location is the cytoplasm. In terms of biological role, acts as a nucleotide-exchange factor (NEF) for chaperone proteins HSPA1A and HSPA1B, promoting the release of ADP from HSPA1A/B thereby triggering substrate release. Prevents the aggregation of denatured proteins in cells under severe stress, on which the ATP levels decrease markedly. Inhibits HSPA8/HSC70 ATPase and chaperone activities. The polypeptide is Heat shock protein 105 kDa (HSPH1) (Pongo abelii (Sumatran orangutan)).